A 453-amino-acid chain; its full sequence is DNA repair protein RadA (453 aa).

The C4-type zinc finger occupies 11–28 (CNQCGATAPKWLGQCPGC). 93-100 (GDPGIGKS) is a binding site for ATP. The RadA KNRFG motif signature appears at 250 to 254 (KNRFG). The interval 349–453 (DVFLSITGGL…TIKDAIRLLL (105 aa)) is lon-protease-like.

It belongs to the RecA family. RadA subfamily.

DNA-dependent ATPase involved in processing of recombination intermediates, plays a role in repairing DNA breaks. Stimulates the branch migration of RecA-mediated strand transfer reactions, allowing the 3' invading strand to extend heteroduplex DNA faster. Binds ssDNA in the presence of ADP but not other nucleotides, has ATPase activity that is stimulated by ssDNA and various branched DNA structures, but inhibited by SSB. Does not have RecA's homology-searching function. The sequence is that of DNA repair protein RadA from Chlamydia pneumoniae (Chlamydophila pneumoniae).